A 399-amino-acid polypeptide reads, in one-letter code: Elongation factor Tu (399 aa).

A tr-type G domain is found at 10–204 (KPHVNIGTIG…AVDSSIPEPE (195 aa)). Positions 19–26 (GHVDHGKT) are G1. Residue 19–26 (GHVDHGKT) coordinates GTP. Mg(2+) is bound at residue Thr26. The tract at residues 60–64 (GITIN) is G2. The segment at 81–84 (DCPG) is G3. GTP contacts are provided by residues 81–85 (DCPGH) and 136–139 (NKCD). The G4 stretch occupies residues 136-139 (NKCD). The interval 174-176 (SGL) is G5.

Belongs to the TRAFAC class translation factor GTPase superfamily. Classic translation factor GTPase family. EF-Tu/EF-1A subfamily. Monomer.

It is found in the cytoplasm. It catalyses the reaction GTP + H2O = GDP + phosphate + H(+). GTP hydrolase that promotes the GTP-dependent binding of aminoacyl-tRNA to the A-site of ribosomes during protein biosynthesis. This Synechococcus sp. (strain CC9605) protein is Elongation factor Tu.